A 147-amino-acid chain; its full sequence is UPF0216 protein MK1676 (147 aa).

This sequence belongs to the UPF0216 family.

The polypeptide is UPF0216 protein MK1676 (Methanopyrus kandleri (strain AV19 / DSM 6324 / JCM 9639 / NBRC 100938)).